We begin with the raw amino-acid sequence, 538 residues long: Guanine nucleotide-binding protein-like 3 (538 aa).

The segment covering 1–45 (MKRPKLKKASKRMTCHKRYKIQKKVREHHRKLRKEAKKRGHKKPK) has biased composition (basic residues). The disordered stretch occupies residues 1–125 (MKRPKLKKAS…KAKSGKQNPK (125 aa)). The basic stretch occupies residues 2-46 (KRPKLKKASKRMTCHKRYKIQKKVREHHRKLRKEAKKRGHKKPKK). Positions 54–95 (APFKEALLREAELRKQQLEELKQQQKLDRQKEQERKRKLEIS) form a coiled coil. Positions 59–94 (ALLREAELRKQQLEELKQQQKLDRQKEQERKRKLEI) are enriched in basic and acidic residues. Residue lysine 79 is modified to N6-acetyllysine. A Glycyl lysine isopeptide (Lys-Gly) (interchain with G-Cter in SUMO2) cross-link involves residue lysine 91. Serine 95 and serine 101 each carry phosphoserine. Residues 95-110 (SPDDEQSNVETQEESD) show a composition bias toward acidic residues. Over residues 115 to 125 (KKAKSGKQNPK) the composition is skewed to basic residues. Positions 129–307 (CQELKKVIEA…IIDSPCFIIS (179 aa)) constitute a CP-type G domain. Position 176 to 179 (176 to 179 (NKSD)) interacts with GTP. Glycyl lysine isopeptide (Lys-Gly) (interchain with G-Cter in SUMO2) cross-links involve residues lysine 177, lysine 248, lysine 262, and lysine 270. A GTP-binding site is contributed by 256–263 (GFPNVGKS). Residues 277 to 451 (VGVSMGLTRS…HLTNKILFRS (175 aa)) form an intermediate region. 300–303 (DSPC) contributes to the GTP binding site. Basic and acidic residues-rich tracts occupy residues 460-473 (EEKD…KQTE) and 481-491 (QEHVTGEKNAE). The acidic stretch occupies residues 460 to 532 (EEKDIPEESP…KMSEEDDAYD (73 aa)). A disordered region spans residues 460–538 (EEKDIPEESP…DAYDFTTDYI (79 aa)). Serine 493, serine 505, and serine 518 each carry phosphoserine. A compositionally biased stretch (basic and acidic residues) spans 514 to 524 (PSDRSFILDKM).

The protein belongs to the TRAFAC class YlqF/YawG GTPase family. Interacts with MDM2; this interaction stabilizes MDM2. Interaction with MDM2 occurs in the nucleoplasm and is triggered by a nucleolar release mechanism, such as mitosis-induced nucleolar disassembly. May interact with p53/TP53 via its basic domain. This interaction is most probably indirect and mediated by MDM2-binding. Expressed in testis.

It is found in the nucleus. The protein localises to the nucleolus. Functionally, may be required to maintain the proliferative capacity of stem cells. Stabilizes MDM2 by preventing its ubiquitination, and hence proteasomal degradation. This is Guanine nucleotide-binding protein-like 3 (Gnl3) from Rattus norvegicus (Rat).